The primary structure comprises 608 residues: Aspartate--tRNA(Asp/Asn) ligase (608 aa).

Residue Glu-175 participates in L-aspartate binding. The tract at residues 199–202 (QLFK) is aspartate. Residue Arg-221 participates in L-aspartate binding. ATP is bound by residues 221 to 223 (RDE) and Gln-230. Position 453 (His-453) interacts with L-aspartate. Glu-487 lines the ATP pocket. Arg-494 provides a ligand contact to L-aspartate. 539–542 (GWDR) serves as a coordination point for ATP. The segment at 566–608 (IDPLTDAPAAITPQQRKEAGIDAKPKPKAEAQAEAQAEESAEK) is disordered. Residues 580–596 (QRKEAGIDAKPKPKAEA) are compositionally biased toward basic and acidic residues.

Belongs to the class-II aminoacyl-tRNA synthetase family. Type 1 subfamily. In terms of assembly, homodimer.

It localises to the cytoplasm. The enzyme catalyses tRNA(Asx) + L-aspartate + ATP = L-aspartyl-tRNA(Asx) + AMP + diphosphate. Functionally, aspartyl-tRNA synthetase with relaxed tRNA specificity since it is able to aspartylate not only its cognate tRNA(Asp) but also tRNA(Asn). Reaction proceeds in two steps: L-aspartate is first activated by ATP to form Asp-AMP and then transferred to the acceptor end of tRNA(Asp/Asn). This chain is Aspartate--tRNA(Asp/Asn) ligase, found in Corynebacterium glutamicum (strain ATCC 13032 / DSM 20300 / JCM 1318 / BCRC 11384 / CCUG 27702 / LMG 3730 / NBRC 12168 / NCIMB 10025 / NRRL B-2784 / 534).